The following is a 956-amino-acid chain: Protein translocase subunit SecA (956 aa).

Residues Gln87, 105–109 (GEGKT), and Asp524 contribute to the ATP site. The Zn(2+) site is built by Cys940, Cys942, Cys951, and His952.

It belongs to the SecA family. In terms of assembly, monomer and homodimer. Part of the essential Sec protein translocation apparatus which comprises SecA, SecYEG and auxiliary proteins SecDF-YajC and YidC. Zn(2+) serves as cofactor.

It is found in the cell inner membrane. The protein localises to the cytoplasm. The catalysed reaction is ATP + H2O + cellular proteinSide 1 = ADP + phosphate + cellular proteinSide 2.. Part of the Sec protein translocase complex. Interacts with the SecYEG preprotein conducting channel. Has a central role in coupling the hydrolysis of ATP to the transfer of proteins into and across the cell membrane, serving both as a receptor for the preprotein-SecB complex and as an ATP-driven molecular motor driving the stepwise translocation of polypeptide chains across the membrane. This is Protein translocase subunit SecA from Beijerinckia indica subsp. indica (strain ATCC 9039 / DSM 1715 / NCIMB 8712).